Reading from the N-terminus, the 538-residue chain is Putative outer membrane porin BglH (538 aa).

A signal peptide spans 1–25 (MFRQNLITSAILLMAPLAFSAQSLA). The segment at 52–82 (KDEEKKKYTPATVNRSVSTNDQGYAANPFPT) is disordered. Residues 62 to 73 (ATVNRSVSTNDQ) show a composition bias toward polar residues.

This sequence belongs to the porin LamB (TC 1.B.3) family.

It localises to the cell outer membrane. Functionally, may be a sugar porin with a broad carbohydrate specificity. This chain is Putative outer membrane porin BglH (bglH), found in Shigella flexneri.